The chain runs to 360 residues: Endolytic murein transglycosylase (360 aa).

Residues 16–36 (IILSSIVVLFLIIGGAFLYGK) traverse the membrane as a helical segment.

Belongs to the transglycosylase MltG family.

It localises to the cell membrane. The enzyme catalyses a peptidoglycan chain = a peptidoglycan chain with N-acetyl-1,6-anhydromuramyl-[peptide] at the reducing end + a peptidoglycan chain with N-acetylglucosamine at the non-reducing end.. In terms of biological role, functions as a peptidoglycan terminase that cleaves nascent peptidoglycan strands endolytically to terminate their elongation. The chain is Endolytic murein transglycosylase from Bacillus subtilis (strain 168).